The primary structure comprises 290 residues: MAPSNLPPVFNATSQDIEMLLAAQCHLGSKNLQVHMEPYLWKTRPDGINVINIGKTWEKIVLAARIIAAIDNPADVAVISARPYGQRAVLKFASHTGATAIAGRFTPGNFTNYITRSFKEPRLIIVTDPRTDAQAIKEASYVNIPVIALCDTDSPTEFVDVAIPTNNKGRHAIGLVWWLLAREVLRLRGTLATRETEWDVVVDLYFYRDPEAEETKEIADETKVAGAEEVGPAAIESGYVGDSWDAAAPGAAAPGAAFAAASATAGATWEAEASGDWAAESAQPNPETKW.

Residues 269 to 290 (WEAEASGDWAAESAQPNPETKW) form a disordered region.

This sequence belongs to the universal ribosomal protein uS2 family. As to quaternary structure, component of the small ribosomal subunit. Mature ribosomes consist of a small (40S) and a large (60S) subunit. The 40S subunit contains about 33 different proteins and 1 molecule of RNA (18S). The 60S subunit contains about 49 different proteins and 3 molecules of RNA (25S, 5.8S and 5S). Interacts with rps21.

Its subcellular location is the cytoplasm. Required for the assembly and/or stability of the 40S ribosomal subunit. Required for the processing of the 20S rRNA-precursor to mature 18S rRNA in a late step of the maturation of 40S ribosomal subunits. The chain is Small ribosomal subunit protein uS2 (rps0) from Talaromyces marneffei (strain ATCC 18224 / CBS 334.59 / QM 7333) (Penicillium marneffei).